Consider the following 530-residue polypeptide: MQKKQLWERYKNLLYHDAELELSVDTSRIDFPEGFLEEMEPRLQQAYQEMEALEKGAVANPDENRMVGHYWLRAPEQAPEAALSEEITSTLAAIKAFASSVHGGNIAAPDGHRFTDLLIIGIGGSALGPQFVADSLGGPGDRLRIWFFDNTDPDGMDKVLSRIGTALKQTLVVVISKSGGTKETRNGMLEARRAFERAGLHFAAHAVAVTGSGSELDGTASWESWLGVFPMWDWVGGRTSVTSAVGLLPAALQGIDVERLLAGARACDQKTRSRVTRENPAALLALSWFHATRGKGARDMVLLPYKDRLLLFSRYLQQLIMESLGKELDRDGNRVLQGIAVYGNKGSTDQHAYVQQLREGVHNFFVTFIEVLKDREGPSLEVEPGATSGDYLSGFFQGTRAALYEKGRESVTITVRELSPVSIGALIALYERAVGLYASLVNVNAYHQPGVEAGKKAAGAVLKLQGEIVEMLRRQPNREFTGEEMALALARPEEVETVFMILRHLAANGDHGVSVTVKDKIWENKYRSKG.

Glutamate 322 functions as the Proton donor in the catalytic mechanism. Catalysis depends on residues histidine 351 and lysine 455.

Belongs to the GPI family.

Its subcellular location is the cytoplasm. It carries out the reaction alpha-D-glucose 6-phosphate = beta-D-fructose 6-phosphate. It functions in the pathway carbohydrate biosynthesis; gluconeogenesis. Its pathway is carbohydrate degradation; glycolysis; D-glyceraldehyde 3-phosphate and glycerone phosphate from D-glucose: step 2/4. In terms of biological role, catalyzes the reversible isomerization of glucose-6-phosphate to fructose-6-phosphate. In Geobacter sp. (strain M21), this protein is Glucose-6-phosphate isomerase.